Consider the following 651-residue polypeptide: Beta-mannosyltransferase 7 (651 aa).

Over 1 to 19 (MKLEMSSYLHKVPNTGITN) the chain is Cytoplasmic. Residues 20–42 (LSNSKSIVFIMFCATLLFIITSS) traverse the membrane as a helical segment. Residues 43-651 (RYLTGSESLG…VKIDEKSEET (609 aa)) lie on the Extracellular side of the membrane. N-linked (GlcNAc...) asparagine glycosylation is found at asparagine 271 and asparagine 423.

This sequence belongs to the BMT family.

The protein localises to the membrane. Beta-mannosyltransferase involved in cell wall biosynthesis through beta-1,2-mannosylation of cell wall phosphopeptidomannan. The sequence is that of Beta-mannosyltransferase 7 (BMT7) from Candida albicans (strain SC5314 / ATCC MYA-2876) (Yeast).